We begin with the raw amino-acid sequence, 238 residues long: Ribonuclease 3 (238 aa).

The RNase III domain maps to 9-141 (LIDFMEKIGY…VVAAVYIDGG (133 aa)). Glu-54 is a Mg(2+) binding site. Asp-58 is a catalytic residue. Mg(2+)-binding residues include Asp-127 and Glu-130. Glu-130 is a catalytic residue. A DRBM domain is found at 168–237 (DYKTSLQEIT…ARRAIEKLKG (70 aa)).

The protein belongs to the ribonuclease III family. As to quaternary structure, homodimer. Mg(2+) serves as cofactor.

Its subcellular location is the cytoplasm. The enzyme catalyses Endonucleolytic cleavage to 5'-phosphomonoester.. In terms of biological role, digests double-stranded RNA. Involved in the processing of primary rRNA transcript to yield the immediate precursors to the large and small rRNAs (23S and 16S). Processes some mRNAs, and tRNAs when they are encoded in the rRNA operon. Processes pre-crRNA and tracrRNA of type II CRISPR loci if present in the organism. This is Ribonuclease 3 from Pseudothermotoga lettingae (strain ATCC BAA-301 / DSM 14385 / NBRC 107922 / TMO) (Thermotoga lettingae).